A 581-amino-acid chain; its full sequence is ATP-dependent lipid A-core flippase (581 aa).

Helical transmembrane passes span 27 to 47, 63 to 83, 154 to 174, 251 to 271, and 279 to 299; these read VFLA…FPAI, MVWL…VIVY, IALI…TLAI, MTPI…FLAL, and GASA…ISPV. The ABC transmembrane type-1 domain maps to 28–311; it reads FLAVIGMVGT…LATVNPTIQR (284 aa). One can recognise an ABC transporter domain in the interval 343–579; the sequence is ICFDNVSLRY…GSYYANLSRL (237 aa). 377 to 384 serves as a coordination point for ATP; the sequence is GASGGGKS.

This sequence belongs to the ABC transporter superfamily. Lipid exporter (TC 3.A.1.106) family. Homodimer.

The protein localises to the cell inner membrane. The enzyme catalyses ATP + H2O + lipid A-core oligosaccharideSide 1 = ADP + phosphate + lipid A-core oligosaccharideSide 2.. Involved in lipopolysaccharide (LPS) biosynthesis. Translocates lipid A-core from the inner to the outer leaflet of the inner membrane. Transmembrane domains (TMD) form a pore in the inner membrane and the ATP-binding domain (NBD) is responsible for energy generation. This chain is ATP-dependent lipid A-core flippase, found in Albidiferax ferrireducens (strain ATCC BAA-621 / DSM 15236 / T118) (Rhodoferax ferrireducens).